We begin with the raw amino-acid sequence, 55 residues long: Large ribosomal subunit protein bL33 (55 aa).

It belongs to the bacterial ribosomal protein bL33 family.

The protein is Large ribosomal subunit protein bL33 of Edwardsiella ictaluri (strain 93-146).